Consider the following 313-residue polypeptide: Homoserine O-succinyltransferase (313 aa).

The active-site Acyl-thioester intermediate is the Cys-142. Residues Lys-163 and Ser-192 each coordinate substrate. The Proton acceptor role is filled by His-235. Glu-237 is a catalytic residue. Residue Arg-249 coordinates substrate.

This sequence belongs to the MetA family.

The protein resides in the cytoplasm. It catalyses the reaction L-homoserine + succinyl-CoA = O-succinyl-L-homoserine + CoA. It functions in the pathway amino-acid biosynthesis; L-methionine biosynthesis via de novo pathway; O-succinyl-L-homoserine from L-homoserine: step 1/1. Its function is as follows. Transfers a succinyl group from succinyl-CoA to L-homoserine, forming succinyl-L-homoserine. The polypeptide is Homoserine O-succinyltransferase (Vibrio parahaemolyticus serotype O3:K6 (strain RIMD 2210633)).